The sequence spans 539 residues: uncharacterized protein (539 aa).

The interval 316–433 (AEHHHQKGKK…ATVERSSPPE (118 aa)) is disordered. Residues 318–352 (HHHQKGKKVPATHRRSSTPHARKTAGTRARTRARK) show a composition bias toward basic residues. Basic and acidic residues predominate over residues 362 to 384 (KISKKDSGESKQKDETAGMERVF). The segment covering 390-402 (NVRTCSSRASRTG) has biased composition (polar residues).

This is an uncharacterized protein from Treponema pallidum (strain Nichols).